Here is a 496-residue protein sequence, read N- to C-terminus: Probable cytosol aminopeptidase (496 aa).

The Mn(2+) site is built by K266 and D271. Residue K278 is part of the active site. Mn(2+) contacts are provided by D289, D348, and E350. Residue R352 is part of the active site.

It belongs to the peptidase M17 family. Mn(2+) is required as a cofactor.

It localises to the cytoplasm. It catalyses the reaction Release of an N-terminal amino acid, Xaa-|-Yaa-, in which Xaa is preferably Leu, but may be other amino acids including Pro although not Arg or Lys, and Yaa may be Pro. Amino acid amides and methyl esters are also readily hydrolyzed, but rates on arylamides are exceedingly low.. The catalysed reaction is Release of an N-terminal amino acid, preferentially leucine, but not glutamic or aspartic acids.. Its function is as follows. Presumably involved in the processing and regular turnover of intracellular proteins. Catalyzes the removal of unsubstituted N-terminal amino acids from various peptides. The protein is Probable cytosol aminopeptidase of Pseudomonas fluorescens (strain Pf0-1).